Consider the following 143-residue polypeptide: Nucleoside diphosphate kinase (143 aa).

Positions 11, 59, 87, 93, 104, and 114 each coordinate ATP. The Pros-phosphohistidine intermediate role is filled by His-117.

This sequence belongs to the NDK family. In terms of assembly, homotetramer. Mg(2+) is required as a cofactor.

Its subcellular location is the cytoplasm. It carries out the reaction a 2'-deoxyribonucleoside 5'-diphosphate + ATP = a 2'-deoxyribonucleoside 5'-triphosphate + ADP. The enzyme catalyses a ribonucleoside 5'-diphosphate + ATP = a ribonucleoside 5'-triphosphate + ADP. In terms of biological role, major role in the synthesis of nucleoside triphosphates other than ATP. The ATP gamma phosphate is transferred to the NDP beta phosphate via a ping-pong mechanism, using a phosphorylated active-site intermediate. The sequence is that of Nucleoside diphosphate kinase from Stutzerimonas stutzeri (strain A1501) (Pseudomonas stutzeri).